Consider the following 914-residue polypeptide: Probable UDP-N-acetylglucosamine--peptide N-acetylglucosaminyltransferase SPINDLY (914 aa).

The disordered stretch occupies residues 1–39; sequence MVGLEDDTERERSPVVENGFSNGSRSSSSSAGVLSPSRK. Residues 19–37 are compositionally biased toward low complexity; sequence GFSNGSRSSSSSAGVLSPS. S35 bears the Phosphoserine mark. 11 TPR repeats span residues 43-76, 77-110, 112-144, 152-185, 186-219, 220-253, 261-294, 295-328, 329-362, 364-396, and 397-430; these read GNDT…DSKN, VEAH…DPHN, CALT…DASY, AIVL…DPHY, APAY…RPMY, AEAY…SPNF, AIAL…NWHY, ADAM…NPHC, AEAC…KPNF, QSLN…NPTY, and AEAF…DPDS. Positions 431–914 are catalytic region; the sequence is RNAGQNRLLA…QLSKRMDSTS (484 aa). The disordered stretch occupies residues 866–914; the sequence is PLISKDLGPSRVSVTGEATPSLKANGSAPVPSSLPTQSPQLSKRMDSTS. Residues 877–889 are compositionally biased toward polar residues; that stretch reads VSVTGEATPSLKA. The span at 894 to 907 shows a compositional bias: low complexity; the sequence is PVPSSLPTQSPQLS.

It belongs to the glycosyltransferase 41 family. O-GlcNAc transferase subfamily. As to quaternary structure, homomultimer; via its TPR repeats. Interacts with GI. Interacts with TCP14 and TCP15. Interacts (via N-terminus) with APRR5. Interacts with CPN20. In terms of tissue distribution, widely expressed. Present throughout the plant (at protein level).

It is found in the cytoplasm. The protein resides in the nucleus. It catalyses the reaction L-seryl-[protein] + UDP-N-acetyl-alpha-D-glucosamine = 3-O-(N-acetyl-beta-D-glucosaminyl)-L-seryl-[protein] + UDP + H(+). The catalysed reaction is L-threonyl-[protein] + UDP-N-acetyl-alpha-D-glucosamine = 3-O-(N-acetyl-beta-D-glucosaminyl)-L-threonyl-[protein] + UDP + H(+). The enzyme catalyses L-seryl-[protein] + GDP-beta-L-fucose = 3-O-(alpha-L-fucosyl)-L-seryl-[protein] + GDP + H(+). It carries out the reaction L-threonyl-[protein] + GDP-beta-L-fucose = 3-O-(alpha-L-fucosyl)-L-threonyl-[protein] + GDP + H(+). The protein operates within protein modification; protein glycosylation. In terms of biological role, probable O-linked N-acetylglucosamine transferase (OGT) involved in various processes such as gibberellin (GA) signaling pathway and circadian clock. OGTs catalyze the addition of nucleotide-activated sugars directly onto the polypeptide through O-glycosidic linkage with the hydroxyl of serine or threonine. Probably acts by adding O-linked sugars to yet unknown proteins. Acts as a repressor of GA signaling pathway to inhibit hypocotyl elongation. Functions with GIGANTEA (GI) in pathways controlling flowering, circadian cotyledon movements and hypocotyl elongation. Acts as a light-regulated promoter of elongation via its interaction with GI. Acts as an activator of cytokinin signaling. Required with SEC for gamete and seed development. Its OGT activity has been proved in vitro but not in vivo. Possesses O-fucosyltransferase activity on specific serine and threonine residues. Mediates O-fucosylation of the DELLA protein RGA, a repressor of the GA signaling pathway. O-fucosylation enhances RGA activity by promoting RGA binding to key transcription factors in brassinosteroid and light-signaling pathways. Regulates root hair patterning upstream of the transcription factor WER, independently of DELLA proteins and GA signaling. Involved in abscisic acid (ABA) signaling partly through functional ABAR. Mediates O-fucosylation of CPN20 that may depress ABA responses during seed germination and seedling development. Involved in the modulation of the pace of the circadian clock by mediating O-fucosylation of APRR5, one of the core circadian clock components. O-fucosylation promotes APRR5 proteolysis. In Arabidopsis thaliana (Mouse-ear cress), this protein is Probable UDP-N-acetylglucosamine--peptide N-acetylglucosaminyltransferase SPINDLY.